Here is a 363-residue protein sequence, read N- to C-terminus: Mitogen-activated protein kinase 12 (363 aa).

The Protein kinase domain occupies 25–309 (YKDLKQVGTG…AAEALAFPFF (285 aa)). Residues 31–39 (VGTGAYGTV) and K54 contribute to the ATP site. Residue D151 is the Proton acceptor of the active site. T181 carries the phosphothreonine modification. The TXY motif lies at 181 to 183 (TGY). Residue Y183 is modified to Phosphotyrosine.

The protein belongs to the protein kinase superfamily. CMGC Ser/Thr protein kinase family. MAP kinase subfamily. Requires Mg(2+) as cofactor. In terms of processing, dually phosphorylated on Thr-181 and Tyr-183, which activates the enzyme.

The protein localises to the cytoplasm. The catalysed reaction is L-seryl-[protein] + ATP = O-phospho-L-seryl-[protein] + ADP + H(+). The enzyme catalyses L-threonyl-[protein] + ATP = O-phospho-L-threonyl-[protein] + ADP + H(+). Its activity is regulated as follows. Activated by threonine and tyrosine phosphorylation. Serine/threonine kinase which acts as an essential component of the MAP kinase signal transduction pathway. MAPK12 is one of the four p38 MAPKs which play an important role in the cascades of cellular responses evoked by extracellular stimuli such as pro-inflammatory cytokines or physical stress leading to direct activation of transcription factors. Accordingly, p38 MAPKs phosphorylate a broad range of proteins and it has been estimated that they may have approximately 200 to 300 substrates each. Some of the targets are downstream kinases such as MAPKAPK2, which are activated through phosphorylation and further phosphorylate additional targets. The chain is Mitogen-activated protein kinase 12 (mapk12) from Danio rerio (Zebrafish).